A 323-amino-acid polypeptide reads, in one-letter code: Cyclin-H (323 aa).

A Phosphoserine; by CDK8 modification is found at S5. S132 carries the post-translational modification Phosphoserine. A disordered region spans residues 296 to 323 (GYEDDDYVSKKPKQEEEEWTDDDLVDAL). S304 is subject to Phosphoserine; by CDK8. Over residues 310–323 (EEEEWTDDDLVDAL) the composition is skewed to acidic residues. T315 bears the Phosphothreonine mark.

This sequence belongs to the cyclin family. Cyclin C subfamily. Associates primarily with CDK7 and MAT1 to form the CAK complex. CAK can further associate with the core-TFIIH to form the TFIIH basal transcription factor.

The protein resides in the nucleus. Its function is as follows. Regulates CDK7, the catalytic subunit of the CDK-activating kinase (CAK) enzymatic complex. CAK activates the cyclin-associated kinases CDK1, CDK2, CDK4 and CDK6 by threonine phosphorylation. CAK complexed to the core-TFIIH basal transcription factor activates RNA polymerase II by serine phosphorylation of the repetitive C-terminal domain (CTD) of its large subunit (POLR2A), allowing its escape from the promoter and elongation of the transcripts. Involved in cell cycle control and in RNA transcription by RNA polymerase II. Its expression and activity are constant throughout the cell cycle. The polypeptide is Cyclin-H (Ccnh) (Rattus norvegicus (Rat)).